The sequence spans 234 residues: Proteasome subunit alpha type-2 (234 aa).

Alanine 2 bears the N-acetylalanine mark. Tyrosine 121 carries the phosphotyrosine modification.

Belongs to the peptidase T1A family. As to quaternary structure, the 26S proteasome consists of a 20S proteasome core and two 19S regulatory subunits. The 20S proteasome core is a barrel-shaped complex made of 28 subunits that are arranged in four stacked rings. The two outer rings are each formed by seven alpha subunits, and the two inner rings are formed by seven beta subunits. The proteolytic activity is exerted by three beta-subunits PSMB5, PSMB6 and PSMB7.

It localises to the cytoplasm. The protein resides in the nucleus. Functionally, component of the 20S core proteasome complex involved in the proteolytic degradation of most intracellular proteins. This complex plays numerous essential roles within the cell by associating with different regulatory particles. Associated with two 19S regulatory particles, forms the 26S proteasome and thus participates in the ATP-dependent degradation of ubiquitinated proteins. The 26S proteasome plays a key role in the maintenance of protein homeostasis by removing misfolded or damaged proteins that could impair cellular functions, and by removing proteins whose functions are no longer required. Associated with the PA200 or PA28, the 20S proteasome mediates ubiquitin-independent protein degradation. This type of proteolysis is required in several pathways including spermatogenesis (20S-PA200 complex) or generation of a subset of MHC class I-presented antigenic peptides (20S-PA28 complex). The polypeptide is Proteasome subunit alpha type-2 (psma2) (Xenopus laevis (African clawed frog)).